The sequence spans 331 residues: SERPKRVFNIYWNVPTFMCHQYGLYFDEVTNFNIKHNSKDDFQGDKISIFYDPGEFPALLPLKEGNYKIRNGGVPQEGNITIHLQRFIENLDKTYPNRNFNGIGVIDFERWRPIFRQNWGNMMIHKKFSIDLVRNEHPFWDKKMIELEASKRFEKYARLFMEETLKLAKKTRKQADWGYYGYPYCFNMSPNNLVPDCDATAMLENDKMSWLFNNQNVLLPSVYIRHELTPDQRVGLVQGRVKEAVRISNNLKHSPKVLSYWWYVYQDDTNTFLTETDVKKTFQEIAINGGDGIIIWGSSSDVNSLSKCKRLREYLLTVLGPITVNVTETVN.

Disulfide bonds link C19–C308 and C185–C197. Residue N79 is glycosylated (N-linked (GlcNAc...) asparagine). E109 functions as the Proton donor in the catalytic mechanism. An N-linked (GlcNAc...) asparagine glycan is attached at N325.

It belongs to the glycosyl hydrolase 56 family. As to expression, expressed by the venom gland.

Its subcellular location is the secreted. It carries out the reaction Random hydrolysis of (1-&gt;4)-linkages between N-acetyl-beta-D-glucosamine and D-glucuronate residues in hyaluronate.. Its function is as follows. Hydrolyzes high molecular weight hyaluronic acid to produce small oligosaccharides. This chain is Hyaluronidase, found in Dolichovespula maculata (Bald-faced hornet).